The sequence spans 430 residues: Serine hydroxymethyltransferase 1 (430 aa).

(6S)-5,6,7,8-tetrahydrofolate contacts are provided by residues Leu-132 and 136–138 (GHL). Lys-241 is modified (N6-(pyridoxal phosphate)lysine).

It belongs to the SHMT family. In terms of assembly, homodimer. The cofactor is pyridoxal 5'-phosphate.

It localises to the cytoplasm. The enzyme catalyses (6R)-5,10-methylene-5,6,7,8-tetrahydrofolate + glycine + H2O = (6S)-5,6,7,8-tetrahydrofolate + L-serine. Its pathway is one-carbon metabolism; tetrahydrofolate interconversion. The protein operates within amino-acid biosynthesis; glycine biosynthesis; glycine from L-serine: step 1/1. Functionally, catalyzes the reversible interconversion of serine and glycine with tetrahydrofolate (THF) serving as the one-carbon carrier. This reaction serves as the major source of one-carbon groups required for the biosynthesis of purines, thymidylate, methionine, and other important biomolecules. Also exhibits THF-independent aldolase activity toward beta-hydroxyamino acids, producing glycine and aldehydes, via a retro-aldol mechanism. This Bordetella parapertussis (strain 12822 / ATCC BAA-587 / NCTC 13253) protein is Serine hydroxymethyltransferase 1.